Consider the following 485-residue polypeptide: Adenosylhomocysteinase (485 aa).

Residues T64, D139, and E205 each coordinate substrate. 206 to 208 (TTT) contacts NAD(+). The substrate site is built by K235 and D239. NAD(+) is bound by residues N240, 269 to 274 (GYGDVG), E292, N327, 348 to 350 (IGH), and N397.

It belongs to the adenosylhomocysteinase family. Homotetramer. It depends on NAD(+) as a cofactor. In terms of tissue distribution, mainly in floral buds and stems.

The enzyme catalyses S-adenosyl-L-homocysteine + H2O = L-homocysteine + adenosine. The protein operates within amino-acid biosynthesis; L-homocysteine biosynthesis; L-homocysteine from S-adenosyl-L-homocysteine: step 1/1. Functionally, adenosylhomocysteine is a competitive inhibitor of S-adenosyl-L-methionine-dependent methyl transferase reactions; therefore adenosylhomocysteinase may play a key role in the control of methylations via regulation of the intracellular concentration of adenosylhomocysteine. The chain is Adenosylhomocysteinase (SAHH) from Petroselinum crispum (Parsley).